A 425-amino-acid chain; its full sequence is Putative nucleoside transporter YegT (425 aa).

At 1-8 (MKTTAKLS) the chain is on the periplasmic side. Residues 9–29 (FMMFVEWFIWGAWFVPLWLWL) traverse the membrane as a helical segment. The Cytoplasmic segment spans residues 30-38 (SKSGFSAGE). A helical membrane pass occupies residues 39–59 (IGWSYACTAIAAILSPILVGS). Residues 60 to 63 (ITDR) lie on the Periplasmic side of the membrane. Residues 64–84 (FFSAQKVLAVLMFAGALLMYF) form a helical membrane-spanning segment. Over 85–90 (AAQQTT) the chain is Cytoplasmic. Residues 91–111 (FAGFFPLLLAYSLTYMPTIAL) traverse the membrane as a helical segment. Residues 112–131 (TNSIAFANVPDVERDFPRIR) lie on the Periplasmic side of the membrane. A helical transmembrane segment spans residues 132–152 (VMGTIGWIASGLACGFLPQIL). Topologically, residues 153–161 (GYADISPTN) are cytoplasmic. A helical transmembrane segment spans residues 162 to 182 (IPLLITAGSSALLGVFAFFLP). At 183–210 (DTPPKSTGKMDIKVMLGLDALILLRDKN) the chain is on the periplasmic side. The helical transmembrane segment at 211-231 (FLVFFFCSFLFAMPLAFYYIF) threads the bilayer. Residues 232 to 244 (ANGYLTEVGMKNA) lie on the Cytoplasmic side of the membrane. Residues 245–265 (TGWMTLGQFSEIFFMLALPFF) traverse the membrane as a helical segment. The Periplasmic segment spans residues 266–287 (TKRFGIKKVLLLGLVTAAIRYG). The helical transmembrane segment at 288–308 (FFIYGSADEYFTYALLFLGIL) threads the bilayer. Residues 309 to 339 (LHGVSYDFYYVTAYIYVDKKAPVHMRTAAQG) are Cytoplasmic-facing. Residues 340–360 (LITLCCQGFGSLLGYRLGGVM) traverse the membrane as a helical segment. The Periplasmic portion of the chain corresponds to 361–379 (MEKMFAYQEPVNGLTFNWS). The helical transmembrane segment at 380–400 (GMWTFGAVMIAIIAVLFMIFF) threads the bilayer. The Cytoplasmic segment spans residues 401–425 (RESDNEITAIKVDDRDIALTQGEVK).

The protein belongs to the major facilitator superfamily. Nucleoside:H(+) symporter (NHS) (TC 2.A.1.10) family.

It localises to the cell inner membrane. Could be involved in nucleoside transport. The protein is Putative nucleoside transporter YegT (yegT) of Escherichia coli (strain K12).